Consider the following 153-residue polypeptide: D-aminoacyl-tRNA deacylase (153 aa).

The short motif at 137-138 (GP) is the Gly-cisPro motif, important for rejection of L-amino acids element.

It belongs to the DTD family. As to quaternary structure, homodimer.

Its subcellular location is the cytoplasm. The catalysed reaction is glycyl-tRNA(Ala) + H2O = tRNA(Ala) + glycine + H(+). It catalyses the reaction a D-aminoacyl-tRNA + H2O = a tRNA + a D-alpha-amino acid + H(+). An aminoacyl-tRNA editing enzyme that deacylates mischarged D-aminoacyl-tRNAs. Also deacylates mischarged glycyl-tRNA(Ala), protecting cells against glycine mischarging by AlaRS. Acts via tRNA-based rather than protein-based catalysis; rejects L-amino acids rather than detecting D-amino acids in the active site. By recycling D-aminoacyl-tRNA to D-amino acids and free tRNA molecules, this enzyme counteracts the toxicity associated with the formation of D-aminoacyl-tRNA entities in vivo and helps enforce protein L-homochirality. This chain is D-aminoacyl-tRNA deacylase, found in Dehalococcoides mccartyi (strain ATCC BAA-2100 / JCM 16839 / KCTC 5957 / BAV1).